A 759-amino-acid polypeptide reads, in one-letter code: LON peptidase N-terminal domain and RING finger protein 3 (759 aa).

Residues 1–69 (MESVRIEQML…PGTSTPESKV (69 aa)) are disordered. Residues 57–66 (EQSPGTSTPE) show a composition bias toward polar residues. One copy of the TPR 1 repeat lies at 67 to 100 (SKVLLTQADALASRGRIREALEVYRQLSERQQLV). The RING-type 1 zinc-finger motif lies at 158-196 (CRKCHGFLSDPVSLSCGHTFCKLCLERGRAADRRCALCG). 3 TPR repeats span residues 243-276 (ASQL…APND), 278-310 (LLYS…RPMG), and 312-344 (KAHF…DGKN). The disordered stretch occupies residues 360–454 (HCSSQEEAAA…TDQGDKPALS (95 aa)). Basic and acidic residues predominate over residues 380–393 (AKVKGDGQQHHMKD). Residues 467 to 505 (CALCMRLFYEPVTTPCGHTFCLKCLERCLDHNAKCPLCK) form an RING-type 2 zinc finger. Residues 546–755 (MEELSNLNKN…GIRRVLAFIS (210 aa)) form the Lon N-terminal domain.

The protein is LON peptidase N-terminal domain and RING finger protein 3 (LONRF3) of Homo sapiens (Human).